Here is a 1576-residue protein sequence, read N- to C-terminus: MAERGLEPSPAAVAALPPEVRAQLAELELELSEGDITQKGYEKKRSKLLSPYSPQTQETDSAVQKELRNQTPAPSAAQTSAPSKYHRTRSGGARDERYRSDIHTEAVQAALAKHKEQKMALPMPTKRRSTFVQSPADACTPPDTSSASEDEGSLRRQAALSAALQQSLQNAESWINRSIQGSSTSSSASSTLSHGEVKGTSGSLADVFANTRIENFSAPPDVTTTTSSSSSSSSIRPANIDLPPSGIVKGMHKGSNRSSLMDTADGVPVSSRVSTKIQQLLNTLKRPKRPPLKEFFVDDSEEIVEVPQPDPNQPKPEGRQMTPVKGEPLGVICNWPPALESALQRWGTTQAKCSCLTALDMTGKPVYTLTYGKLWSRSLKLAYTLLNKLGTKNEPVLKPGDRVALVYPNNDPVMFMVAFYGCLLAEVIPVPIEVPLTRKDAGGQQIGFLLGSCGIALALTSEVCLKGLPKTQNGEIVQFKGWPRLKWVVTDSKYLSKPPKDWQPHISPAGTEPAYIEYKTSKEGSVMGVTVSRLAMLSHCQALSQACNYSEGETIVNVLDFKKDAGLWHGMFANVMNKMHTISVPYSVMKTCPLSWVQRVHAHKAKVALVKCRDLHWAMMAHRDQRDVSLSSLRMLIVTDGANPWSVSSCDAFLSLFQSHGLKPEAICPCATSAEAMTVAIRRPGVPGAPLPGRAILSMNGLSYGVIRVNTEDKNSALTVQDVGHVMPGGMMCIVKPDGPPQLCKTDEIGEICVSSRTGGMMYFGLAGVTKNTFEVIPVNSAGSPVGDVPFIRSGLLGFVGPGSLVFVVGKMDGLLMVSGRRHNADDIVATGLAVESIKTVYRGRIAVFSVSVFYDERIVVVAEQRPDASEEDSFQWMSRVLQAIDSIHQVGVYCLALVPANTLPKTPLGGIHISQTKQLFLEGSLHPCNILMCPHTCVTNLPKPRQKQPGVGPASVMVGNLVAGKRIAQAAGRDLGQIEENDLVRKHQFLAEILQWRAQATPDHVLFMLLNAKGTTVCTASCLQLHKRAERIASVLGDKGHLNAGDNVVLLYPPGIELIAAFYGCLYAGCIPVTVRPPHAQNLTATLPTVRMIVDVSKAACILTSQTLMRLLRSREAAAAVDVKTWPTIIDTDDLPRKRLPQLYKPPTPEMLAYLDFSVSTTGMLTGVKMSHSAVNALCRAIKLQCELYSSRQIAICLDPYCGLGFALWCLCSVYSGHQSVLIPPMELENNLFLWLSTVNQYKIRDTFCSYSVMELCTKGLGNQVEVLKTRGINLSCVRTCVVVAEERPRVALQQSFSKLFKDIGLSPRAVSTTFGSRVNVAICLQGTSGPDPTTVYVDLKSLRHDRVRLVERGAPQSLLLSESGKILPGVKVVIVNPETKGPVGDSHLGEIWVNSPHTASGYYTIYDSETLQADHFNTRLSFGDAAQTLWARTGYLGFVRRTELTAATGERHDALYVVGALDETLELRGLRYHPIDIETSVSRIHRSIAECAVFTWTNLLVVVVELCGSEQEALDLVPLVTNVVLEEHYLIVGVVVVVDPGVIPINSRGEKQRMHLRDSFLADQLDPIYVAYNM.

S9, S50, and S53 each carry phosphoserine. The DMAP1-binding domain occupies 12-131 (AVAALPPEVR…PMPTKRRSTF (120 aa)). The disordered stretch occupies residues 31–167 (LSEGDITQKG…AALSAALQQS (137 aa)). Residues 52-62 (YSPQTQETDSA) show a composition bias toward polar residues. Residues 70–83 (QTPAPSAAQTSAPS) are compositionally biased toward low complexity. Residue T71 is modified to Phosphothreonine. Residues 92 to 104 (GARDERYRSDIHT) show a composition bias toward basic and acidic residues. Position 100 is a phosphoserine (S100). T140 is subject to Phosphothreonine. Phosphoserine occurs at positions 146, 148, and 153. Residues 155–167 (RRQAALSAALQQS) are compositionally biased toward low complexity. Phosphoserine is present on residues S178, S193, and S203. Positions 179 to 201 (IQGSSTSSSASSTLSHGEVKGTS) are disordered. Residues 182–193 (SSTSSSASSTLS) are compositionally biased toward low complexity. The segment at 217 to 246 (SAPPDVTTTTSSSSSSSSIRPANIDLPPSG) is disordered. A compositionally biased stretch (low complexity) spans 223 to 234 (TTTTSSSSSSSS). A Phosphoserine modification is found at S259.

It belongs to the DIP2 family. As to quaternary structure, interacts with alpha-tubulin. Moderately expressed in adult brain, placenta, skeletal muscle, heart, kidney, pancreas, lung, spleen and colon. Expression was weaker in adult liver, kidney, spleen, and ovary, and in fetal brain and liver. In the brain, it is expressed in the cerebral cortex; the frontal, parietal, occipital and temporal lobes; the paracentral gyrus; the pons; the corpus callosum and the hippocampus. Highest expression levels in the brain were found in the cerebral cortex and the frontal and parietal lobes.

The protein resides in the cell projection. Its subcellular location is the dendrite. It is found in the axon. The protein localises to the perikaryon. Its function is as follows. Negatively regulates axonal outgrowth and is essential for normal synaptic transmission. Not required for regulation of axon polarity. Promotes acetylation of alpha-tubulin. This is Disco-interacting protein 2 homolog B (DIP2B) from Homo sapiens (Human).